The sequence spans 451 residues: tRNA modification GTPase MnmE (451 aa).

3 residues coordinate (6S)-5-formyl-5,6,7,8-tetrahydrofolate: Arg37, Glu95, and Lys135. The 145-residue stretch at 232–376 (GLSIVIMGPP…LVEAIADFAG (145 aa)) folds into the TrmE-type G domain. Position 242 (Asn242) interacts with K(+). GTP contacts are provided by residues 242–247 (NAGKST), 261–267 (SEIAGTT), and 286–289 (DTAG). Ser246 contributes to the Mg(2+) binding site. Residues Ser261, Ile263, and Thr266 each coordinate K(+). Position 267 (Thr267) interacts with Mg(2+). A (6S)-5-formyl-5,6,7,8-tetrahydrofolate-binding site is contributed by Lys451.

The protein belongs to the TRAFAC class TrmE-Era-EngA-EngB-Septin-like GTPase superfamily. TrmE GTPase family. In terms of assembly, homodimer. Heterotetramer of two MnmE and two MnmG subunits. The cofactor is K(+).

Its subcellular location is the cytoplasm. Functionally, exhibits a very high intrinsic GTPase hydrolysis rate. Involved in the addition of a carboxymethylaminomethyl (cmnm) group at the wobble position (U34) of certain tRNAs, forming tRNA-cmnm(5)s(2)U34. This chain is tRNA modification GTPase MnmE, found in Beijerinckia indica subsp. indica (strain ATCC 9039 / DSM 1715 / NCIMB 8712).